The primary structure comprises 500 residues: tRNA (guanine(37)-N(1))-methyltransferase (500 aa).

Residues His215, 253 to 254 (DL), 281 to 282 (DA), and Asn312 each bind S-adenosyl-L-methionine. Residues 463–500 (QIVAKKTPKPAPRPLPAKNKTTPDTNKMETDLTKLEMK) form a disordered region. A compositionally biased stretch (basic and acidic residues) spans 488 to 500 (NKMETDLTKLEMK).

This sequence belongs to the class I-like SAM-binding methyltransferase superfamily. TRM5/TYW2 family. Monomer.

The protein localises to the mitochondrion matrix. It is found in the nucleus. It localises to the cytoplasm. It carries out the reaction guanosine(37) in tRNA + S-adenosyl-L-methionine = N(1)-methylguanosine(37) in tRNA + S-adenosyl-L-homocysteine + H(+). Its function is as follows. Specifically methylates the N1 position of guanosine-37 in various cytoplasmic and mitochondrial tRNAs. Methylation is not dependent on the nature of the nucleoside 5' of the target nucleoside. This is the first step in the biosynthesis of wybutosine (yW), a modified base adjacent to the anticodon of tRNAs and required for accurate decoding. The polypeptide is tRNA (guanine(37)-N(1))-methyltransferase (Anopheles darlingi (Mosquito)).